The sequence spans 503 residues: ATP-dependent RNA helicase dbp3 (503 aa).

Over residues 1 to 25 (MAKRVQHEGGDYRPQKRSKNERNGE) the composition is skewed to basic and acidic residues. Positions 1-35 (MAKRVQHEGGDYRPQKRSKNERNGEGSKVSPSAEA) are disordered. Positions 104–112 (SFSSPTPIQ) match the Q motif motif. Residues 116 to 292 (WPLLFAGRDV…ATFMTSAVTV (177 aa)) enclose the Helicase ATP-binding domain. 129–136 (AETGSGKT) is a binding site for ATP. Positions 239–242 (DEAD) match the DEAD box motif. Positions 307 to 472 (RIKQVVEVVK…DVPDALLKFG (166 aa)) constitute a Helicase C-terminal domain.

The protein belongs to the DEAD box helicase family. DDX5/DBP2 subfamily.

The protein localises to the nucleus. It localises to the nucleolus. It catalyses the reaction ATP + H2O = ADP + phosphate + H(+). Functionally, ATP-dependent RNA helicase required for 60S ribosomal subunit synthesis. Involved in efficient pre-rRNA processing, predominantly at site A3, which is necessary for the normal formation of 25S and 5.8S rRNAs. The polypeptide is ATP-dependent RNA helicase dbp3 (dbp3) (Neosartorya fischeri (strain ATCC 1020 / DSM 3700 / CBS 544.65 / FGSC A1164 / JCM 1740 / NRRL 181 / WB 181) (Aspergillus fischerianus)).